A 163-amino-acid chain; its full sequence is Nucleotide-binding protein cbdbA1256 (163 aa).

It belongs to the YajQ family.

Its function is as follows. Nucleotide-binding protein. This chain is Nucleotide-binding protein cbdbA1256, found in Dehalococcoides mccartyi (strain CBDB1).